The following is a 1104-amino-acid chain: Translation initiation factor IF-2 (1104 aa).

2 disordered regions span residues 51 to 444 and 461 to 497; these read SLLG…LAAQ and LARPAKPKSQQRTAPKPVAAMRKRKKETARQRQRRRA. 2 stretches are compositionally biased toward low complexity: residues 60–119 and 127–164; these read AKPA…KPQA and ATPKPVISKPAPALVKAAAAPARPTAAKPVPRPAAAKP. Residues 189 to 202 are compositionally biased toward pro residues; sequence APTPRPTPARPTPR. Low complexity-rich tracts occupy residues 203–215, 227–246, 311–336, and 366–396; these read PAGAGSPARPTPG, GAPSRPGAPTRAGAPAKPGA, STTGSGRPGAPTRPGAPGRPGMPAGM, and PTKAGAGAGTATPPVARPNSPSAPRRPSFRP. Over residues 406–420 the composition is skewed to basic and acidic residues; that stretch reads GRPDWDDSARLDALR. The span at 481 to 495 shows a compositional bias: basic residues; that stretch reads MRKRKKETARQRQRR. The tr-type G domain occupies 596–768; it reads RRPPVVTVMG…LLLVTEVEDL (173 aa). The segment at 605–612 is G1; sequence GHVDHGKT. 605–612 is a binding site for GTP; it reads GHVDHGKT. The interval 630-634 is G2; sequence GITQH. Residues 655–658 form a G3 region; the sequence is DTPG. GTP is bound by residues 655 to 659 and 709 to 712; these read DTPGH and NKID. Residues 709–712 form a G4 region; the sequence is NKID. The interval 745–747 is G5; that stretch reads SAI.

This sequence belongs to the TRAFAC class translation factor GTPase superfamily. Classic translation factor GTPase family. IF-2 subfamily.

Its subcellular location is the cytoplasm. Functionally, one of the essential components for the initiation of protein synthesis. Protects formylmethionyl-tRNA from spontaneous hydrolysis and promotes its binding to the 30S ribosomal subunits. Also involved in the hydrolysis of GTP during the formation of the 70S ribosomal complex. In Synechococcus sp. (strain CC9605), this protein is Translation initiation factor IF-2.